The primary structure comprises 236 residues: Phosphoribosylaminoimidazole-succinocarboxamide synthase (236 aa).

This sequence belongs to the SAICAR synthetase family.

It carries out the reaction 5-amino-1-(5-phospho-D-ribosyl)imidazole-4-carboxylate + L-aspartate + ATP = (2S)-2-[5-amino-1-(5-phospho-beta-D-ribosyl)imidazole-4-carboxamido]succinate + ADP + phosphate + 2 H(+). Its pathway is purine metabolism; IMP biosynthesis via de novo pathway; 5-amino-1-(5-phospho-D-ribosyl)imidazole-4-carboxamide from 5-amino-1-(5-phospho-D-ribosyl)imidazole-4-carboxylate: step 1/2. This Rickettsia felis (strain ATCC VR-1525 / URRWXCal2) (Rickettsia azadi) protein is Phosphoribosylaminoimidazole-succinocarboxamide synthase.